The chain runs to 367 residues: DNA replication and repair protein RecF (367 aa).

Gly-30–Thr-37 contributes to the ATP binding site.

Belongs to the RecF family.

The protein resides in the cytoplasm. The RecF protein is involved in DNA metabolism; it is required for DNA replication and normal SOS inducibility. RecF binds preferentially to single-stranded, linear DNA. It also seems to bind ATP. This chain is DNA replication and repair protein RecF, found in Pseudomonas putida (strain GB-1).